The chain runs to 252 residues: Small ribosomal subunit protein eS1 (252 aa).

The protein belongs to the eukaryotic ribosomal protein eS1 family. Component of the small ribosomal subunit. Mature ribosomes consist of a small (40S) and a large (60S) subunit. The 40S subunit contains about 33 different proteins and 1 molecule of RNA (18S). The 60S subunit contains about 49 different proteins and 3 molecules of RNA (25S, 5.8S and 5S).

The protein localises to the cytoplasm. The chain is Small ribosomal subunit protein eS1 from Enterocytozoon bieneusi (strain H348) (Microsporidian parasite).